A 463-amino-acid polypeptide reads, in one-letter code: Exodeoxyribonuclease 7 large subunit (463 aa).

This sequence belongs to the XseA family. In terms of assembly, heterooligomer composed of large and small subunits.

The protein localises to the cytoplasm. The catalysed reaction is Exonucleolytic cleavage in either 5'- to 3'- or 3'- to 5'-direction to yield nucleoside 5'-phosphates.. Its function is as follows. Bidirectionally degrades single-stranded DNA into large acid-insoluble oligonucleotides, which are then degraded further into small acid-soluble oligonucleotides. This is Exodeoxyribonuclease 7 large subunit from Bordetella bronchiseptica (strain ATCC BAA-588 / NCTC 13252 / RB50) (Alcaligenes bronchisepticus).